We begin with the raw amino-acid sequence, 349 residues long: Histidinol-phosphate aminotransferase (349 aa).

Lysine 206 bears the N6-(pyridoxal phosphate)lysine mark.

It belongs to the class-II pyridoxal-phosphate-dependent aminotransferase family. Histidinol-phosphate aminotransferase subfamily. As to quaternary structure, homodimer. The cofactor is pyridoxal 5'-phosphate.

The enzyme catalyses L-histidinol phosphate + 2-oxoglutarate = 3-(imidazol-4-yl)-2-oxopropyl phosphate + L-glutamate. Its pathway is amino-acid biosynthesis; L-histidine biosynthesis; L-histidine from 5-phospho-alpha-D-ribose 1-diphosphate: step 7/9. This chain is Histidinol-phosphate aminotransferase, found in Streptococcus mutans serotype c (strain ATCC 700610 / UA159).